A 194-amino-acid polypeptide reads, in one-letter code: Peptidyl-tRNA hydrolase (194 aa).

Position 16 (Tyr16) interacts with tRNA. The active-site Proton acceptor is His21. TRNA is bound by residues Phe67, Asn69, and Asn115.

Belongs to the PTH family. As to quaternary structure, monomer.

The protein localises to the cytoplasm. It carries out the reaction an N-acyl-L-alpha-aminoacyl-tRNA + H2O = an N-acyl-L-amino acid + a tRNA + H(+). Functionally, hydrolyzes ribosome-free peptidyl-tRNAs (with 1 or more amino acids incorporated), which drop off the ribosome during protein synthesis, or as a result of ribosome stalling. In terms of biological role, catalyzes the release of premature peptidyl moieties from peptidyl-tRNA molecules trapped in stalled 50S ribosomal subunits, and thus maintains levels of free tRNAs and 50S ribosomes. This chain is Peptidyl-tRNA hydrolase, found in Colwellia psychrerythraea (strain 34H / ATCC BAA-681) (Vibrio psychroerythus).